We begin with the raw amino-acid sequence, 23 residues long: Paralytic peptide 1 (23 aa).

Cysteine 7 and cysteine 19 are disulfide-bonded.

Belongs to the GBP/PSP1/paralytic peptide family. In terms of tissue distribution, hemolymph.

In terms of biological role, causes rapid, rigid paralysis when injected into Lepidopteran larvae. The physiological role may be to reduce hemolymph loss following injury and promote wound healing. This Manduca sexta (Tobacco hawkmoth) protein is Paralytic peptide 1.